The sequence spans 216 residues: Ribose-5-phosphate isomerase A (216 aa).

Residues 26 to 29, 79 to 82, and 92 to 95 each bind substrate; these read TGST, DGAD, and KGGG. Glutamate 101 acts as the Proton acceptor in catalysis. Lysine 119 is a substrate binding site.

This sequence belongs to the ribose 5-phosphate isomerase family. In terms of assembly, homodimer.

The enzyme catalyses aldehydo-D-ribose 5-phosphate = D-ribulose 5-phosphate. It participates in carbohydrate degradation; pentose phosphate pathway; D-ribose 5-phosphate from D-ribulose 5-phosphate (non-oxidative stage): step 1/1. Functionally, catalyzes the reversible conversion of ribose-5-phosphate to ribulose 5-phosphate. The chain is Ribose-5-phosphate isomerase A from Legionella pneumophila (strain Lens).